The sequence spans 492 residues: Cytochrome P450 monooxygenase rdc4 (492 aa).

Cys-435 serves as a coordination point for heme.

The protein belongs to the cytochrome P450 family. Requires heme as cofactor.

It functions in the pathway secondary metabolite biosynthesis. Cytochrome P450 monooxygenase; part of the gene cluster that mediates the biosynthesis of radicicol, a resorcylic acid lactone (RAL) that irreversibly inhibits the HSP90 molecular chaperone, an important target for cancer chemotherapy. The radicicol cluster encodes only two apparent post-PKS enzymes, a cytochrome P450 monooxygenase (rdc4) and a non-heme halogenase (rdc2) that could introduce the epoxide and the chlorine, respectively. If this cluster includes all the genes required for radicicol biosynthesis, the remaining structural features of radicicol are presumably generated by the PKSs rdc1 and rdc5. The C-2' ketone could arise if the R-PKS rdc5 and NR-PKS rdc1 each carry out four iterations, in contrast to the five iteration-three iteration split for the hypothemycin PKSs. The origin of the cis 5',6' double bond is not known. The radicicol R-PKS rdc5 ER domain may catalyze either double bond isomerization or reduction in the third iteration. The chain is Cytochrome P450 monooxygenase rdc4 from Metacordyceps chlamydosporia (Nematophagous fungus).